The sequence spans 150 residues: Large-conductance mechanosensitive channel (150 aa).

2 helical membrane-spanning segments follow: residues Val14–Phe34 and Gly81–Val101.

This sequence belongs to the MscL family. As to quaternary structure, homopentamer.

It is found in the cell membrane. Its function is as follows. Channel that opens in response to stretch forces in the membrane lipid bilayer. May participate in the regulation of osmotic pressure changes within the cell. In Syntrophomonas wolfei subsp. wolfei (strain DSM 2245B / Goettingen), this protein is Large-conductance mechanosensitive channel.